The chain runs to 657 residues: uncharacterized protein (657 aa).

Ser114 carries the phosphoserine modification. Disordered regions lie at residues 142–216, 228–248, 291–312, 335–354, and 399–522; these read LASQ…SDEE, SSREKNTNQGFSSANVSEEEE, STRSRADYPQSHVSSDTASHTP, SSPGRSEAETVDEPVSEGAD, and AEAS…SGRH. Residues 143-169 are compositionally biased toward polar residues; sequence ASQNTDKTSQNQARELPVTENNAQNAK. Residues 190–206 show a composition bias toward basic and acidic residues; the sequence is AGKERTLQTPKQKEPAR. Ser213 carries the post-translational modification Phosphoserine. Polar residues-rich tracts occupy residues 234-243 and 301-312; these read TNQGFSSANV and SHVSSDTASHTP. Over residues 343-354 the composition is skewed to acidic residues; that stretch reads ETVDEPVSEGAD. Residues 437–451 show a composition bias toward low complexity; that stretch reads SASSASAIQQDSTSS. A compositionally biased stretch (polar residues) spans 462–484; the sequence is NTVSSAYSEDFENSPSLTASEPT. Residues 485–495 show a composition bias toward basic and acidic residues; it reads AHSKESLDRTL. Polar residues predominate over residues 499-513; the sequence is SESSSSVKTDLPQTA.

This is an uncharacterized protein from Homo sapiens (Human).